Consider the following 383-residue polypeptide: Protein salvador homolog 1 (383 aa).

2 positions are modified to phosphoserine: Ser-94 and Ser-136. 2 WW domains span residues 199 to 232 (LPLPPGWSVDWTMRGRKYYIDHNTNTTHWSHPLE) and 234 to 267 (EGLPPGWERVESSEFGTYYVDHTNKKAQYRHPCA). Residue Thr-210 is modified to Phosphothreonine. The SARAH domain occupies 321-368 (ILKWELFQLADLDTYQGMLKLLFMKELEQIVKMYEAYRQALLTELENR). Residues 344-373 (MKELEQIVKMYEAYRQALLTELENRKQRQQ) are a coiled coil.

Homodimer. Stabilized through interaction with STK3/MST2 or STK4/MST1. Interacts (via SARAH domain) with isoform 1 of NEK2. Interacts with ESR1 only in the presence of STK3/MST2. Interacts with WTIP and AJUBA. Post-translationally, phosphorylated by STK3/MST2 and STK4/MST1. Phosphorylation is not required for SAV1 stability and may increase the number of protein binding sites on the scaffold molecule. In terms of tissue distribution, ubiquitously expressed in adult tissues with highest expression in the pancreas, aorta and interventricular septum and lowest expression in skeletal muscle. Expression was higher in fetal than in the adult heart. Expressed in various cell lines.

It localises to the nucleus. The protein resides in the cytoplasm. Regulator of STK3/MST2 and STK4/MST1 in the Hippo signaling pathway which plays a pivotal role in organ size control and tumor suppression by restricting proliferation and promoting apoptosis. The core of this pathway is composed of a kinase cascade wherein STK3/MST2 and STK4/MST1, in complex with its regulatory protein SAV1, phosphorylates and activates LATS1/2 in complex with its regulatory protein MOB1, which in turn phosphorylates and inactivates YAP1 oncoprotein and WWTR1/TAZ. Phosphorylation of YAP1 by LATS1/2 inhibits its translocation into the nucleus to regulate cellular genes important for cell proliferation, cell death, and cell migration. SAV1 is required for STK3/MST2 and STK4/MST1 activation and promotes cell-cycle exit and terminal differentiation in developing epithelial tissues. Plays a role in centrosome disjunction by regulating the localization of NEK2 to centrosomes, and its ability to phosphorylate CROCC and CEP250. In conjunction with STK3/MST2, activates the transcriptional activity of ESR1 through the modulation of its phosphorylation. This chain is Protein salvador homolog 1, found in Homo sapiens (Human).